Reading from the N-terminus, the 109-residue chain is Nucleoid-associated protein LGAS_0369 (109 aa).

This sequence belongs to the YbaB/EbfC family. Homodimer.

It is found in the cytoplasm. The protein localises to the nucleoid. Binds to DNA and alters its conformation. May be involved in regulation of gene expression, nucleoid organization and DNA protection. The chain is Nucleoid-associated protein LGAS_0369 from Lactobacillus gasseri (strain ATCC 33323 / DSM 20243 / BCRC 14619 / CIP 102991 / JCM 1131 / KCTC 3163 / NCIMB 11718 / NCTC 13722 / AM63).